The following is a 212-amino-acid chain: Imidazole glycerol phosphate synthase subunit HisH (212 aa).

The Glutamine amidotransferase type-1 domain maps to 2-212 (KVAVIDYGMG…KNFLAWDGNV (211 aa)). C82 functions as the Nucleophile in the catalytic mechanism. Active-site residues include H190 and E192.

Heterodimer of HisH and HisF.

Its subcellular location is the cytoplasm. It catalyses the reaction 5-[(5-phospho-1-deoxy-D-ribulos-1-ylimino)methylamino]-1-(5-phospho-beta-D-ribosyl)imidazole-4-carboxamide + L-glutamine = D-erythro-1-(imidazol-4-yl)glycerol 3-phosphate + 5-amino-1-(5-phospho-beta-D-ribosyl)imidazole-4-carboxamide + L-glutamate + H(+). It carries out the reaction L-glutamine + H2O = L-glutamate + NH4(+). The protein operates within amino-acid biosynthesis; L-histidine biosynthesis; L-histidine from 5-phospho-alpha-D-ribose 1-diphosphate: step 5/9. IGPS catalyzes the conversion of PRFAR and glutamine to IGP, AICAR and glutamate. The HisH subunit catalyzes the hydrolysis of glutamine to glutamate and ammonia as part of the synthesis of IGP and AICAR. The resulting ammonia molecule is channeled to the active site of HisF. The chain is Imidazole glycerol phosphate synthase subunit HisH from Chromobacterium violaceum (strain ATCC 12472 / DSM 30191 / JCM 1249 / CCUG 213 / NBRC 12614 / NCIMB 9131 / NCTC 9757 / MK).